A 106-amino-acid chain; its full sequence is Putative defensin-like protein 224 (106 aa).

A signal peptide spans 1–23 (MKTLSLFFTLVILISSCVSNLMA). Disulfide bonds link cysteine 60/cysteine 78, cysteine 64/cysteine 84, and cysteine 68/cysteine 86.

This sequence belongs to the DEFL family.

The protein resides in the secreted. In Arabidopsis thaliana (Mouse-ear cress), this protein is Putative defensin-like protein 224.